The chain runs to 169 residues: Sec-independent protein translocase protein TatB (169 aa).

A helical membrane pass occupies residues 2 to 22 (SPGIGMPELLVVLVLALVVVG). The segment at 106-169 (NQAETDADKA…AKPVDEIKGR (64 aa)) is disordered.

The protein belongs to the TatB family. In terms of assembly, the Tat system comprises two distinct complexes: a TatABC complex, containing multiple copies of TatA, TatB and TatC subunits, and a separate TatA complex, containing only TatA subunits. Substrates initially bind to the TatABC complex, which probably triggers association of the separate TatA complex to form the active translocon.

The protein resides in the cell inner membrane. Part of the twin-arginine translocation (Tat) system that transports large folded proteins containing a characteristic twin-arginine motif in their signal peptide across membranes. Together with TatC, TatB is part of a receptor directly interacting with Tat signal peptides. TatB may form an oligomeric binding site that transiently accommodates folded Tat precursor proteins before their translocation. The chain is Sec-independent protein translocase protein TatB from Maricaulis maris (strain MCS10) (Caulobacter maris).